The chain runs to 273 residues: Formamidopyrimidine-DNA glycosylase (273 aa).

P2 (schiff-base intermediate with DNA) is an active-site residue. Residue E3 is the Proton donor of the active site. The active-site Proton donor; for beta-elimination activity is K59. Residues H92 and R111 each contribute to the DNA site. Residues 239 to 273 (KVYGKTGEPCVICGTPIEKIKLNGRGTHFCPHCQK) form an FPG-type zinc finger. The Proton donor; for delta-elimination activity role is filled by R263.

It belongs to the FPG family. As to quaternary structure, monomer. Zn(2+) is required as a cofactor.

It catalyses the reaction Hydrolysis of DNA containing ring-opened 7-methylguanine residues, releasing 2,6-diamino-4-hydroxy-5-(N-methyl)formamidopyrimidine.. The enzyme catalyses 2'-deoxyribonucleotide-(2'-deoxyribose 5'-phosphate)-2'-deoxyribonucleotide-DNA = a 3'-end 2'-deoxyribonucleotide-(2,3-dehydro-2,3-deoxyribose 5'-phosphate)-DNA + a 5'-end 5'-phospho-2'-deoxyribonucleoside-DNA + H(+). In terms of biological role, involved in base excision repair of DNA damaged by oxidation or by mutagenic agents. Acts as a DNA glycosylase that recognizes and removes damaged bases. Has a preference for oxidized purines, such as 7,8-dihydro-8-oxoguanine (8-oxoG). Has AP (apurinic/apyrimidinic) lyase activity and introduces nicks in the DNA strand. Cleaves the DNA backbone by beta-delta elimination to generate a single-strand break at the site of the removed base with both 3'- and 5'-phosphates. The chain is Formamidopyrimidine-DNA glycosylase from Listeria innocua serovar 6a (strain ATCC BAA-680 / CLIP 11262).